Here is a 403-residue protein sequence, read N- to C-terminus: MLKLLQQYEYKIIYKRMLYTCFILFIYILGTNISIVSYNDMQVKHESFFKIAISNMGGDVNTLNIFTLGLGPWLTSMIILMLISYRNMDKYMKQTSLEKHYKERILTLILSVIQSYFVIHEYVSKERVHQDNIYLTILILVTGTMLLVWLADKNSRYGIAGPMPIVMVSIIKSMMHQKMEYIDASHIVIALLIILVIITLFILLFIELVEVRIPYIDLMNVSATNMKSYLSWKVNPAGSITLMMSISAFVFLKSGIHFILSMFNKSISDDMPMLTFDSPVGISVYLVIQMLLGYFLSRFLINTKQKSKDFLKSGNYFSGVKPGKDTERYLNYQARRVCWFGLALVTVIIGIPLYFTLFVPHLSTEIYFSVQLIVLVYISINIAETIRTYLYFDKYKPFLNQYW.

Transmembrane regions (helical) follow at residues 17 to 37, 63 to 83, 105 to 125, 131 to 151, 157 to 177, 186 to 206, 240 to 260, 276 to 296, 339 to 359, and 366 to 386; these read MLYT…SIVS, LNIF…LMLI, ILTL…YVSK, DNIY…VWLA, YGIA…MMHQ, HIVI…LLFI, ITLM…HFIL, FDSP…GYFL, WFGL…TLFV, and IYFS…AETI.

This sequence belongs to the SecY/SEC61-alpha family. SecY2 subfamily. As to quaternary structure, may form heterotrimers with SecE and SecG subunits (Potential). Component of the accessory SecA2/SecY2 protein translocase complex required to export cell wall protein SrpA.

Its subcellular location is the cell membrane. Functionally, the central subunit of a protein translocation channel (Potential). Part of the accessory SecA2/SecY2 system specifically required to export SraP, a serine-rich repeat cell wall protein encoded upstream in the same operon. This Staphylococcus aureus (strain NCTC 8325 / PS 47) protein is Accessory Sec system protein translocase subunit SecY2.